A 411-amino-acid polypeptide reads, in one-letter code: Glutamyl-tRNA reductase (411 aa).

Residues 49–52, S99, 104–106, and Q110 contribute to the substrate site; these read TCNR and ENE. Residue C50 is the Nucleophile of the active site. 179-184 serves as a coordination point for NADP(+); it reads GAGEAG.

It belongs to the glutamyl-tRNA reductase family. As to quaternary structure, homodimer.

It catalyses the reaction (S)-4-amino-5-oxopentanoate + tRNA(Glu) + NADP(+) = L-glutamyl-tRNA(Glu) + NADPH + H(+). It participates in porphyrin-containing compound metabolism; protoporphyrin-IX biosynthesis; 5-aminolevulinate from L-glutamyl-tRNA(Glu): step 1/2. In terms of biological role, catalyzes the NADPH-dependent reduction of glutamyl-tRNA(Glu) to glutamate 1-semialdehyde (GSA). This is Glutamyl-tRNA reductase from Hyperthermus butylicus (strain DSM 5456 / JCM 9403 / PLM1-5).